Here is a 1571-residue protein sequence, read N- to C-terminus: Paternally-expressed gene 3 protein (1571 aa).

Disordered stretches follow at residues 1–120 (MYHH…NPIQ) and 137–241 (AEDD…QERG). 5 stretches are compositionally biased toward basic and acidic residues: residues 35 to 56 (GSERDLERRGRSRDVEPRDRWP), 80 to 99 (FGLDRDDDRRSMDYESRSQD), 169 to 186 (PEAKKPSHRRGICEDESS), 193 to 215 (KFIKDVARNPKSGRARELNERPP), and 223 to 241 (DNWKDSSSSRRESVIQERG). Positions 199–265 (ARNPKSGRAR…DLASRSRALE (67 aa)) are 10 X 5 AA repeat of P-H-X-X-E. The interval 199-265 (ARNPKSGRAR…DLASRSRALE (67 aa)) is 3 X 5 AA repeat of P-H-D-D-K. 4 C2H2-type zinc fingers span residues 325–347 (YVCDECGRQFSVISEFVEHQIMH), 378–400 (FECKECGETFSRSAALAEHRQIH), 436–458 (YECKVCKETFLHSSALIEHQKIH), and 520–542 (YECKVCGESFLHLSSLREHQKIH). The segment at 456–495 (KIHGRGNSDDRDNERERERDRLRARAREQRERERERERER) is disordered. 3 disordered regions span residues 585-649 (ALMG…LKFP), 672-713 (EAQK…TYEG), and 764-820 (REDA…AKKK). Basic and acidic residues predominate over residues 592 to 614 (SSEHQKNRSRRNFFEGRGFEKPF). Polar residues-rich tracts occupy residues 770–781 (GSSSSNYHTPNV) and 799–808 (DVTFSVPSSS). Positions 809–820 (VREHQKARAKKK) are enriched in basic and acidic residues. A C2H2-type 5 zinc finger spans residues 850–872 (FECQECGEAFARRSELIEHQKIH). Residues 937-1070 (FNAEEPHDKE…ESHGQEKVED (134 aa)) form a disordered region. The span at 940–1070 (EEPHDKETHG…ESHGQEKVED (131 aa)) shows a compositional bias: basic and acidic residues. 13 tandem repeats follow at residues 942–946 (PHDKE), 967–971 (PHGDE), 987–991 (PHDDK), 992–996 (PHGQE), 997–1001 (PHDDK), 1002–1006 (PHGQE), 1007–1011 (PHDDK), 1012–1016 (PHGQE), 1017–1021 (PHGDE), 1022–1026 (PHGQE), 1027–1031 (PHGDE), 1032–1036 (PHDKE), and 1047–1051 (PHSEE). C2H2-type zinc fingers lie at residues 1091–1113 (YECQDCGLGFTDLNDLTSHQDTH), 1147–1169 (YECPKCGESFIHSSLLFEHQRVH), 1209–1231 (IRCRQCGQGFIHSSALNEHMRQH), and 1266–1289 (FECTICGECFFTAKQLGDHHTKVH). The C2H2-type 10; degenerate zinc-finger motif lies at 1317 to 1339 (YECKDCGQSFLDDTVIAERMVFH). Residues 1373–1487 (NAEAAEPEVE…DQEIEVEEPY (115 aa)) form a disordered region. Composition is skewed to acidic residues over residues 1377–1397 (AEPEVEAAEPEVEAAEPEVEA), 1405–1418 (EGPDGEAAEPDGEA), and 1431–1485 (DADE…EVEE). 2 C2H2-type zinc fingers span residues 1488–1510 (YNCHECAETFASSSAFGEHLKSH) and 1547–1569 (FKCDVCGQLFNDRLSLARHQNSH).

The protein belongs to the krueppel C2H2-type zinc-finger protein family. In terms of assembly, homodimer. Interacts with SIAH1A and SIAH2. Interacts with TRAF2. As to expression, brain, glial cells, neurons, skeletal muscle, uterus and placenta. In the placenta it is found in all trophoblast cells.

The protein localises to the nucleus. It localises to the cytoplasm. Its function is as follows. Induces apoptosis in cooperation with SIAH1A. Acts as a mediator between p53/TP53 and BAX in a neuronal death pathway that is activated by DNA damage. Acts synergistically with TRAF2 and inhibits TNF induced apoptosis through activation of NF-kappa-B. Plays a role in regulating maternal behavior and offspring growth. The sequence is that of Paternally-expressed gene 3 protein (Peg3) from Mus musculus (Mouse).